The chain runs to 102 residues: Glutaredoxin-C13 (102 aa).

In terms of domain architecture, Glutaredoxin spans 1-101; the sequence is MDKVMRMSSE…PLIKPYQSIL (101 aa). Cysteines 21 and 24 form a disulfide.

Belongs to the glutaredoxin family. CC-type subfamily.

It localises to the cytoplasm. Functionally, has a glutathione-disulfide oxidoreductase activity in the presence of NADPH and glutathione reductase. Reduces low molecular weight disulfides and proteins. In Arabidopsis thaliana (Mouse-ear cress), this protein is Glutaredoxin-C13 (GRXC13).